We begin with the raw amino-acid sequence, 364 residues long: D-alanine--D-alanine ligase (364 aa).

An ATP-grasp domain is found at Lys-146–Leu-352. Thr-179–Glu-234 contacts ATP. Asp-305, Glu-319, and Asn-321 together coordinate Mg(2+).

The protein belongs to the D-alanine--D-alanine ligase family. Mg(2+) serves as cofactor. Requires Mn(2+) as cofactor.

The protein resides in the cytoplasm. The catalysed reaction is 2 D-alanine + ATP = D-alanyl-D-alanine + ADP + phosphate + H(+). It functions in the pathway cell wall biogenesis; peptidoglycan biosynthesis. Its function is as follows. Cell wall formation. The protein is D-alanine--D-alanine ligase of Chlorobaculum parvum (strain DSM 263 / NCIMB 8327) (Chlorobium vibrioforme subsp. thiosulfatophilum).